Here is a 109-residue protein sequence, read N- to C-terminus: MLQTAEAPWSQAETQSAHALFRKAYQRELDGLLATVQAQASQITQIDDLWKLHDFLSAKRHEIDGKYDDRQSVIIFVFAQLLKEGLVQAEELTFLAADKQSKIKALARL.

Probably a dimer, interacts with the C-terminal domain of OCP-R.

Its subcellular location is the cellular thylakoid membrane. Functionally, destabilizes orange carotenoid protein-R form (OCP-R), the FRP-OCP interaction accelerates the OCP-R to OCP-O conversion. Increases fluorescence recovery following non-photochemical quenching (NPQ) by OCP, most probably by destabilizing OCP-R binding to the phycobilisome core. The protein is Fluorescence recovery protein (frp) of Synechocystis sp. (strain ATCC 27184 / PCC 6803 / Kazusa).